Consider the following 222-residue polypeptide: MYAVFGLTRSEVTPHEAAAARYKHRGVIDRQGAAMTSRRAPDGGLNLDDFMRRQRGRHLDLPYPRGYTLFVCDVEETILTPRDVEYWKLLVVTQGQLRVIGTIGLANLFSWDRSVAGVAADGSVLCYEISRENFVVRAADSLPQLLERGLLHSYFEDVERAAQGRLRHGNRSGLRRDADGQVIRESACYVSRVLLRHRVTPGKQEITDAMFEAGNVPSALLP.

Belongs to the herpesviridae US22 family. As to quaternary structure, interacts with UL25. Interacts with ISGylation machinery components ISG15, UBA7 and HERC5; these interactions inhibit global protein ISGylation. In terms of processing, ISGylated; ISGylation regulates UL26 stability and inhibits its activities to suppress NF-kappa-B signaling.

It is found in the virion tegument. It localises to the host nucleus. Functionally, plays a role in the inhibition of host NF-kappa-B. This inhibition affects both the canonical and the non-canonical pathways. Blocks the induction of host IKK phosphorylation. May also influence the normal phosphorylation state of several tegument proteins including pp28 in virions. Also suppresses virus-induced ISGylation independent of its own ISGylation. The chain is Tegument protein UL26 (UL26) from Homo sapiens (Human).